The primary structure comprises 550 residues: Hydroxylamine reductase (550 aa).

[2Fe-2S] cluster is bound by residues cysteine 3, cysteine 6, cysteine 18, and cysteine 25. Hybrid [4Fe-2O-2S] cluster is bound by residues histidine 249, glutamate 273, cysteine 317, cysteine 405, cysteine 433, cysteine 458, glutamate 492, and lysine 494. Cysteine persulfide is present on cysteine 405.

This sequence belongs to the HCP family. The cofactor is [2Fe-2S] cluster. Hybrid [4Fe-2O-2S] cluster is required as a cofactor.

The protein resides in the cytoplasm. It carries out the reaction A + NH4(+) + H2O = hydroxylamine + AH2 + H(+). Catalyzes the reduction of hydroxylamine to form NH(3) and H(2)O. The chain is Hydroxylamine reductase from Pectobacterium carotovorum subsp. carotovorum (strain PC1).